The primary structure comprises 613 residues: Dihydroxy-acid dehydratase (613 aa).

D81 is a Mg(2+) binding site. C122 contacts [2Fe-2S] cluster. The Mg(2+) site is built by D123 and K124. K124 carries the post-translational modification N6-carboxylysine. C195 provides a ligand contact to [2Fe-2S] cluster. E491 contacts Mg(2+). S517 serves as the catalytic Proton acceptor.

The protein belongs to the IlvD/Edd family. As to quaternary structure, homodimer. [2Fe-2S] cluster serves as cofactor. The cofactor is Mg(2+).

It catalyses the reaction (2R)-2,3-dihydroxy-3-methylbutanoate = 3-methyl-2-oxobutanoate + H2O. The enzyme catalyses (2R,3R)-2,3-dihydroxy-3-methylpentanoate = (S)-3-methyl-2-oxopentanoate + H2O. The protein operates within amino-acid biosynthesis; L-isoleucine biosynthesis; L-isoleucine from 2-oxobutanoate: step 3/4. Its pathway is amino-acid biosynthesis; L-valine biosynthesis; L-valine from pyruvate: step 3/4. Its function is as follows. Functions in the biosynthesis of branched-chain amino acids. Catalyzes the dehydration of (2R,3R)-2,3-dihydroxy-3-methylpentanoate (2,3-dihydroxy-3-methylvalerate) into 2-oxo-3-methylpentanoate (2-oxo-3-methylvalerate) and of (2R)-2,3-dihydroxy-3-methylbutanoate (2,3-dihydroxyisovalerate) into 2-oxo-3-methylbutanoate (2-oxoisovalerate), the penultimate precursor to L-isoleucine and L-valine, respectively. The polypeptide is Dihydroxy-acid dehydratase (Nitrobacter hamburgensis (strain DSM 10229 / NCIMB 13809 / X14)).